Here is a 113-residue protein sequence, read N- to C-terminus: Hydrogenase maturation factor HypA (113 aa).

Histidine 2 contacts Ni(2+). Zn(2+) is bound by residues cysteine 73, cysteine 76, cysteine 89, and cysteine 92.

Belongs to the HypA/HybF family.

Involved in the maturation of [NiFe] hydrogenases. Required for nickel insertion into the metal center of the hydrogenase. The protein is Hydrogenase maturation factor HypA of Bradyrhizobium sp. (strain ORS 278).